The sequence spans 401 residues: Phosphoglycerate kinase (401 aa).

Substrate-binding positions include 21–23, Arg-36, 59–62, Arg-116, and Arg-156; these read DLN and HQGR. ATP is bound by residues Glu-331 and 357 to 360; that span reads GGDT.

The protein belongs to the phosphoglycerate kinase family.

Its subcellular location is the cytoplasm. The enzyme catalyses (2R)-3-phosphoglycerate + ATP = (2R)-3-phospho-glyceroyl phosphate + ADP. The protein operates within carbohydrate degradation; glycolysis; pyruvate from D-glyceraldehyde 3-phosphate: step 2/5. In Haloarcula vallismortis (Halobacterium vallismortis), this protein is Phosphoglycerate kinase (pgk).